We begin with the raw amino-acid sequence, 66 residues long: UPF0370 protein YpfN (66 aa).

A helical membrane pass occupies residues 4-24 (LAKYWWILVLVFLVGVLLNVI). The interval 39 to 66 (KPELPPHRDFNDKWDDEDDWPKKDQPKK) is disordered. Residues 42-51 (LPPHRDFNDK) are compositionally biased toward basic and acidic residues.

This sequence belongs to the UPF0370 family.

Its subcellular location is the cell membrane. The polypeptide is UPF0370 protein YpfN (Salmonella paratyphi C (strain RKS4594)).